A 404-amino-acid chain; its full sequence is Glucose-1-phosphate adenylyltransferase (404 aa).

Alpha-D-glucose 1-phosphate contacts are provided by residues Y99, G164, 179–180 (EK), and S197.

It belongs to the bacterial/plant glucose-1-phosphate adenylyltransferase family. As to quaternary structure, homotetramer.

The catalysed reaction is alpha-D-glucose 1-phosphate + ATP + H(+) = ADP-alpha-D-glucose + diphosphate. Its pathway is glycan biosynthesis; glycogen biosynthesis. Involved in the biosynthesis of ADP-glucose, a building block required for the elongation reactions to produce glycogen. Catalyzes the reaction between ATP and alpha-D-glucose 1-phosphate (G1P) to produce pyrophosphate and ADP-Glc. The protein is Glucose-1-phosphate adenylyltransferase of Rhodococcus opacus (strain B4).